Reading from the N-terminus, the 504-residue chain is Putative BTB/POZ domain-containing protein R842 (504 aa).

Residues 21–91 enclose the BTB domain; it reads SDVKLILKDN…FYGFKSPSVT (71 aa).

The protein belongs to the mimivirus BTB/WD family.

This chain is Putative BTB/POZ domain-containing protein R842, found in Acanthamoeba polyphaga (Amoeba).